The primary structure comprises 714 residues: MSNVQEWQQLANKELSRREKTVDSLVHQTAEGIAIKPLYTEADLDNLEVTGTLPGLPPYVRGPRATMYTAQPWTIRQYAGFSTAKESNAFYRRNLAAGQKGLSVAFDLATHRGYDSDNPRVAGDVGKAGVAIDTVEDMKVLFDQIPLDKMSVSMTMNGAVLPVLAFYIVAAEEQGVTPDKLTGTIQNDILKEYLCRNTYIYPPKPSMRIIADIIAWCSGNMPRFNTISISGYHMGEAGANCVQQVAFTLADGIEYIKAAISAGLKIDDFAPRLSFFFGIGMDLFMNVAMLRAARYLWSEAVSGFGAQDPKSLALRTHCQTSGWSLTEQDPYNNVIRTTIEALAATLGGTQSLHTNAFDEALGLPTDFSARIARNTQIIIQEESELCRTVDPLAGSYYIESLTDQIVKQARAIIQQIDEAGGMAKAIEAGLPKRMIEEASAREQSLIDQGKRVIVGVNKYKLDHEDETDVLEIDNVMVRNEQIASLERIRATRDDAAVTAALNALTHAAQHNENLLAAAVNAARVRATLGEISDALEVAFDRYLVPSQCVTGVIAQSYHQSEKSASEFDAIVAQTEQFLADNGRRPRILIAKMGQDGHDRGAKVIASAYSDLGFDVDLSPMFSTPEEIARLAVENDVHVVGASSLAAGHKTLIPELVEALKKWGREDICVVAGGVIPPQDYAFLQERGVAAIYGPGTPMLDSVRDVLNLISQHHD.

In terms of domain architecture, B12-binding spans 584–714; it reads RPRILIAKMG…VLNLISQHHD (131 aa). Histidine 597 serves as a coordination point for adenosylcob(III)alamin.

It belongs to the methylmalonyl-CoA mutase family. As to quaternary structure, homodimer. Interacts with ArgK. The cofactor is adenosylcob(III)alamin.

The catalysed reaction is (R)-methylmalonyl-CoA = succinyl-CoA. Its function is as follows. Catalyzes the interconversion of succinyl-CoA and methylmalonyl-CoA. Could be part of a pathway that converts succinate to propionate. This Escherichia coli (strain K12) protein is Methylmalonyl-CoA mutase (scpA).